The primary structure comprises 345 residues: RDS/peripherin-like protein xRDS35 (345 aa).

The Cytoplasmic segment spans residues 1-24; sequence MVLFKAKFSFQRRVKLAQTLWLLS. The chain crosses the membrane as a helical span at residues 25–43; sequence WLSVLVGCLTFGMGIFLKV. The Lumenal segment spans residues 44 to 61; that stretch reads QLWIHNEVMENTSAHAVP. Asn54 carries N-linked (GlcNAc...) asparagine glycosylation. A helical transmembrane segment spans residues 62–80; the sequence is NTVITAGLVGILLGIYAGK. Over 81 to 99 the chain is Cytoplasmic; the sequence is VSQASMDVTKYQRWKSFMM. Residues 100-123 traverse the membrane as a helical segment; sequence PFFFLAILSCLVCLAALVLSVALR. Topologically, residues 124–264 are lumenal; sequence GTLEESLKIG…LSYYTGIMAT (141 aa). Asn229 carries N-linked (GlcNAc...) asparagine glycosylation. Residues 265-290 form a helical membrane-spanning segment; sequence NGAAVTLSFLLQASVLVSLRYLHTSM. Residues 291–345 are Cytoplasmic-facing; sequence DKISGPDDMEADTEGFILEKGVTETMNTTLEKMKGLFMSNQVETAEGGGEAAAAS.

The protein belongs to the PRPH2/ROM1 family. In terms of assembly, homodimer; disulfide-linked. As to expression, rod specific.

It is found in the membrane. The protein is RDS/peripherin-like protein xRDS35 (rds35) of Xenopus laevis (African clawed frog).